The primary structure comprises 426 residues: GTPase HflX (426 aa).

The 168-residue stretch at 198–365 folds into the Hflx-type G domain; sequence PTVSLVGYTN…ALTERLSGEV (168 aa). Residues 204-211, 229-233, 251-254, 317-320, and 343-345 each bind GTP; these read GYTNAGKS, FATLD, DTVG, NKID, and SAQ. Mg(2+) contacts are provided by Ser-211 and Thr-231.

Belongs to the TRAFAC class OBG-HflX-like GTPase superfamily. HflX GTPase family. As to quaternary structure, monomer. Associates with the 50S ribosomal subunit. This interaction occurs in the presence of GTP, GDP, ATP or ADP, but not in their absence. It depends on Mg(2+) as a cofactor.

It is found in the cytoplasm. Its activity is regulated as follows. Intrinsic GTPase activity is very slow and can be stimulated by the presence of 50S ribosomal subunits or 70S ribosomes. GTPase activity is inhibited by ATP. Its function is as follows. GTPase that associates with the 50S ribosomal subunit and may have a role during protein synthesis or ribosome biogenesis. In vitro, also exhibits ATPase activity. The polypeptide is GTPase HflX (Escherichia coli (strain K12)).